The chain runs to 130 residues: Ribonuclease P protein component 2 (130 aa).

This sequence belongs to the eukaryotic/archaeal RNase P protein component 2 family. In terms of assembly, consists of a catalytic RNA component and at least 4-5 protein subunits.

The protein localises to the cytoplasm. It catalyses the reaction Endonucleolytic cleavage of RNA, removing 5'-extranucleotides from tRNA precursor.. Functionally, part of ribonuclease P, a protein complex that generates mature tRNA molecules by cleaving their 5'-ends. This chain is Ribonuclease P protein component 2, found in Methanococcus vannielii (strain ATCC 35089 / DSM 1224 / JCM 13029 / OCM 148 / SB).